The chain runs to 210 residues: MLLSVVAIALLAYLLGSFPAGYLAGRWLKGIDIRKEGSGSTGATNVLRVLGKGPALVVFITDILKGVLAVVAARAIASTNGLDPSAIAWLAAFAAIIAVVGHSLPVWLSFRGGKSVATSLGVLLALSPVVGLSGFGAFLLLLALFRIVSLGSIAGAITVIVLMLILPEPLPNKILGIASGIYVIYRHRSNLDRLRRGEEPRIGQRLSTNR.

A run of 5 helical transmembrane segments spans residues 1-21, 53-73, 87-107, 122-142, and 147-167; these read MLLS…FPAG, GPAL…VVAA, IAWL…LPVW, VLLA…LLLL, and IVSL…LILP.

The protein belongs to the PlsY family. As to quaternary structure, probably interacts with PlsX.

It localises to the cell inner membrane. The catalysed reaction is an acyl phosphate + sn-glycerol 3-phosphate = a 1-acyl-sn-glycero-3-phosphate + phosphate. Its pathway is lipid metabolism; phospholipid metabolism. In terms of biological role, catalyzes the transfer of an acyl group from acyl-phosphate (acyl-PO(4)) to glycerol-3-phosphate (G3P) to form lysophosphatidic acid (LPA). This enzyme utilizes acyl-phosphate as fatty acyl donor, but not acyl-CoA or acyl-ACP. The protein is Glycerol-3-phosphate acyltransferase of Synechococcus elongatus (strain ATCC 33912 / PCC 7942 / FACHB-805) (Anacystis nidulans R2).